We begin with the raw amino-acid sequence, 226 residues long: V-type proton ATPase subunit E (226 aa).

The protein belongs to the V-ATPase E subunit family. V-ATPase is a heteromultimeric enzyme made up of two complexes: the ATP-hydrolytic V1 complex and the proton translocation V0 complex. The V1 complex consists of three catalytic AB heterodimers that form a heterohexamer, three peripheral stalks each consisting of EG heterodimers, one central rotor including subunits D and F, and the regulatory subunits C and H. The proton translocation complex V0 consists of the proton transport subunit a, a ring of proteolipid subunits c9c'', rotary subunit d, subunits e and f, and the accessory subunits VhaAC45 and ATP6AP2.

In terms of biological role, subunit of the V1 complex of vacuolar(H+)-ATPase (V-ATPase), a multisubunit enzyme composed of a peripheral complex (V1) that hydrolyzes ATP and a membrane integral complex (V0) that translocates protons. V-ATPase is responsible for acidifying and maintaining the pH of intracellular compartments and in some cell types, is targeted to the plasma membrane, where it is responsible for acidifying the extracellular environment. This is V-type proton ATPase subunit E (Vha26) from Drosophila melanogaster (Fruit fly).